Here is a 482-residue protein sequence, read N- to C-terminus: UDP-N-acetylmuramate--L-alanine ligase (482 aa).

An ATP-binding site is contributed by 123–129 (GTHGKTT).

The protein belongs to the MurCDEF family.

It is found in the cytoplasm. It carries out the reaction UDP-N-acetyl-alpha-D-muramate + L-alanine + ATP = UDP-N-acetyl-alpha-D-muramoyl-L-alanine + ADP + phosphate + H(+). Its pathway is cell wall biogenesis; peptidoglycan biosynthesis. In terms of biological role, cell wall formation. This Pseudomonas putida (strain W619) protein is UDP-N-acetylmuramate--L-alanine ligase.